A 248-amino-acid polypeptide reads, in one-letter code: Tyrosine recombinase XerD-like (248 aa).

Residues 1–72 form the Core-binding (CB) domain; sequence MKSYIEPFIA…TANQFLYYLY (72 aa). In terms of domain architecture, Tyr recombinase spans 85-248; it reads DTMKVMRTEK…PVTLEKYYKS (164 aa). Residues lysine 149 and arginine 213 contribute to the active site. The O-(3'-phospho-DNA)-tyrosine intermediate role is filled by tyrosine 245.

It belongs to the 'phage' integrase family. XerD-like subfamily.

It is found in the cytoplasm. Putative tyrosine recombinase. Not involved in the cutting and rejoining of the recombining DNA molecules on dif(SL) site. The protein is Tyrosine recombinase XerD-like of Streptococcus pyogenes serotype M3 (strain ATCC BAA-595 / MGAS315).